Consider the following 348-residue polypeptide: tRNA N6-adenosine threonylcarbamoyltransferase (348 aa).

2 residues coordinate Fe cation: His116 and His120. Residues 138 to 142 (QVSGG), Asp171, Gly184, Asp188, and Asn277 contribute to the substrate site. Residue Asp309 participates in Fe cation binding.

It belongs to the KAE1 / TsaD family. The cofactor is Fe(2+).

The protein resides in the cytoplasm. The catalysed reaction is L-threonylcarbamoyladenylate + adenosine(37) in tRNA = N(6)-L-threonylcarbamoyladenosine(37) in tRNA + AMP + H(+). In terms of biological role, required for the formation of a threonylcarbamoyl group on adenosine at position 37 (t(6)A37) in tRNAs that read codons beginning with adenine. Is involved in the transfer of the threonylcarbamoyl moiety of threonylcarbamoyl-AMP (TC-AMP) to the N6 group of A37, together with TsaE and TsaB. TsaD likely plays a direct catalytic role in this reaction. The chain is tRNA N6-adenosine threonylcarbamoyltransferase from Lactobacillus gasseri (strain ATCC 33323 / DSM 20243 / BCRC 14619 / CIP 102991 / JCM 1131 / KCTC 3163 / NCIMB 11718 / NCTC 13722 / AM63).